The following is a 343-amino-acid chain: Transcription factor MYB83 (343 aa).

Residues 1-16 (MMMRKPDITTIRDKGK) are compositionally biased toward basic and acidic residues. The tract at residues 1 to 33 (MMMRKPDITTIRDKGKPNHACGGNNNKPKLRKG) is disordered. 2 consecutive HTH myb-type domains span residues 27 to 79 (KPKL…INYL) and 80 to 134 (RPDL…KKRL). 2 consecutive DNA-binding regions (H-T-H motif) follow at residues 55 to 79 (WSDI…INYL) and 107 to 130 (WSQI…NSTL). Residues 134–172 (LKNNSNNNTSSGSSPNNSNSNSLDPRDQHVDMGGNSTSL) form a disordered region. Low complexity predominate over residues 136–155 (NNSNNNTSSGSSPNNSNSNS).

Expressed specifically in fiber and vessel cells that are undergoing secondary wall thickening in floral stems. Expressed in vessels but not in xylary fibers in the developing secondary xylem of roots.

It is found in the nucleus. In terms of biological role, transcription factor that acts as a molecular switch in the NAC012/SND1-mediated transcriptional network regulating secondary wall biosynthesis. Is directly activated by NAC012/SND1 and its close homologs, including NAC043/NST1, NAC066/NST2, NAC101/VND6 and NAC030/VND7. Is required for functional expression of a number of secondary wall-associated transcription factors and secondary wall biosynthetic genes involved in cellulose, xylan and lignin synthesis. Functions redundantly with MYB46 in the transcriptional regulatory cascade leading to secondary wall formation in fibers and vessels. Transcription activator that binds to the DNA consensus sequence 5'-ACC[AT]A[AC][TC]-3', designated as the secondary wall MYB-responsive element (SMRE). Regulates directly numerous transcription factors and a number of genes involved in secondary wall biosynthesis that contain SMRE elements in their promoters. The protein is Transcription factor MYB83 of Arabidopsis thaliana (Mouse-ear cress).